The sequence spans 59 residues: MKVSVDKDACIGCGVCASICPDVFEMDDDGKAKALVAETDLECAKEAAESCPTGAITVE.

The 4Fe-4S ferredoxin-type domain maps to Lys-2 to Asp-29. 3 residues coordinate [4Fe-4S] cluster: Cys-10, Cys-13, and Cys-16. Cysteines 20 and 43 form a disulfide. A [4Fe-4S] cluster-binding site is contributed by Cys-51.

The cofactor is [4Fe-4S] cluster. It depends on [3Fe-4S] cluster as a cofactor.

Its function is as follows. Ferredoxins are iron-sulfur proteins that transfer electrons in a wide variety of metabolic reactions. The sequence is that of Ferredoxin from Thermococcus litoralis.